The following is an 882-amino-acid chain: Bifunctional heparan sulfate N-deacetylase/N-sulfotransferase 1 (882 aa).

The Cytoplasmic segment spans residues 1–17 (MPALACLRRLCRHLSPQ). The tract at residues 1–169 (MPALACLRRL…VAYGVGIIGF (169 aa)) is sufficient for localization to Golgi membrane. A helical; Signal-anchor for type II membrane protein transmembrane segment spans residues 18-38 (AVLFLLFVFCLFSVFVSAYYL). At 39 to 882 (YGWNRGLEPS…WLREDLQNTR (844 aa)) the chain is on the lumenal side. The tract at residues 40–598 (GWNRGLEPSA…KRHKDIWSKE (559 aa)) is heparan sulfate N-deacetylase 1. Asn-231, Asn-351, and Asn-401 each carry an N-linked (GlcNAc...) asparagine glycan. The heparan sulfate N-sulfotransferase 1 stretch occupies residues 599–882 (KTCDRFPKLL…WLREDLQNTR (284 aa)). Lys-614 functions as the For sulfotransferase activity in the catalytic mechanism. 614–618 (KTGTT) contributes to the adenosine 3',5'-bisphosphate binding site. N-linked (GlcNAc...) asparagine glycosylation is present at Asn-667. 2 residues coordinate adenosine 3',5'-bisphosphate: Ser-712 and Trp-817. The cysteines at positions 818 and 828 are disulfide-linked. 833-837 (KGRKY) contacts adenosine 3',5'-bisphosphate.

This sequence belongs to the sulfotransferase 1 family. NDST subfamily. Monomer. Interacts with heparan sulfate co-polymerase subunits EXT1 and EXT2. In terms of tissue distribution, widely expressed in adult and throughout development.

It is found in the golgi apparatus membrane. The protein localises to the golgi apparatus. The protein resides in the trans-Golgi network membrane. Its subcellular location is the cis-Golgi network membrane. It catalyses the reaction N-acetyl-alpha-D-glucosaminyl-[heparan sulfate](n) + H2O = alpha-D-glucosaminyl-[heparan sulfate](n) + acetate. The catalysed reaction is alpha-D-glucosaminyl-[heparan sulfate](n) + 3'-phosphoadenylyl sulfate = N-sulfo-alpha-D-glucosaminyl-[heparan sulfate](n) + adenosine 3',5'-bisphosphate + 2 H(+). Its pathway is glycan metabolism; heparan sulfate biosynthesis. It participates in glycan metabolism; heparin biosynthesis. Inhibited by long N-sulfated sequences (more than 6 sugar residues) accumulating in its substrates heparan sulfate, and heparin. Functionally, essential bifunctional enzyme that catalyzes both the N-deacetylation and the N-sulfation of glucosamine (GlcNAc) of the glycosaminoglycan in heparan sulfate. Modifies the GlcNAc-GlcA disaccharide repeating sugar backbone to make N-sulfated heparosan, a prerequisite substrate for later modifications in heparin biosynthesis. Plays a role in determining the extent and pattern of sulfation of heparan sulfate. Participates in biosynthesis of heparan sulfate that can ultimately serve as L-selectin ligands, thereby playing a role in inflammatory response. Required for the exosomal release of SDCBP, CD63 and syndecan. The protein is Bifunctional heparan sulfate N-deacetylase/N-sulfotransferase 1 of Mus musculus (Mouse).